A 207-amino-acid chain; its full sequence is MALPFARCWKLYRWGTKRWGVPAVESRRGISFKLEEKTAHSSLALFRGDTGVKYGLVGLEPTKVALNLERFREWAVVLGDTTVTSGRHYWEVTVKRSQQFRIGVADVDMSRDSCVGADDRSWVFSYAQRKWHSMLANEKAPIKGIGQPEKVGLLLDYEAKKLSLVDVSRISVIHTLQTDFRGPVAPAFALWDGELLTHSGLEVPKGL.

In terms of domain architecture, B30.2/SPRY spans 12-207 (YRWGTKRWGV…HSGLEVPKGL (196 aa)). 2 positions are modified to N6-acetyllysine: Lys-53 and Lys-130. Lys-139 carries the N6-succinyllysine modification.

The chain is SPRY domain-containing protein 4 (Spryd4) from Mus musculus (Mouse).